The chain runs to 457 residues: Bifunctional protein GlmU (457 aa).

A pyrophosphorylase region spans residues 1-229 (MSNSAKSVVI…HSEMEGVNNR (229 aa)). Residues 11-14 (LAAG), Lys25, Gln76, 81-82 (GT), 103-105 (YGD), Gly140, Glu154, Asn169, and Asn227 each bind UDP-N-acetyl-alpha-D-glucosamine. A Mg(2+)-binding site is contributed by Asp105. Asn227 contacts Mg(2+). The linker stretch occupies residues 230 to 250 (LQLAALERIYQTEQAERLLLE). The segment at 251–457 (GVMLLDPARF…GWKRPVKKKQ (207 aa)) is N-acetyltransferase. UDP-N-acetyl-alpha-D-glucosamine is bound by residues Arg333 and Lys351. Catalysis depends on His363, which acts as the Proton acceptor. UDP-N-acetyl-alpha-D-glucosamine contacts are provided by Tyr366 and Asn377. Acetyl-CoA contacts are provided by residues Ala380, 386 to 387 (NY), Ser405, Ala423, and Arg440.

The protein in the N-terminal section; belongs to the N-acetylglucosamine-1-phosphate uridyltransferase family. This sequence in the C-terminal section; belongs to the transferase hexapeptide repeat family. In terms of assembly, homotrimer. The cofactor is Mg(2+).

The protein localises to the cytoplasm. The catalysed reaction is alpha-D-glucosamine 1-phosphate + acetyl-CoA = N-acetyl-alpha-D-glucosamine 1-phosphate + CoA + H(+). It carries out the reaction N-acetyl-alpha-D-glucosamine 1-phosphate + UTP + H(+) = UDP-N-acetyl-alpha-D-glucosamine + diphosphate. It functions in the pathway nucleotide-sugar biosynthesis; UDP-N-acetyl-alpha-D-glucosamine biosynthesis; N-acetyl-alpha-D-glucosamine 1-phosphate from alpha-D-glucosamine 6-phosphate (route II): step 2/2. It participates in nucleotide-sugar biosynthesis; UDP-N-acetyl-alpha-D-glucosamine biosynthesis; UDP-N-acetyl-alpha-D-glucosamine from N-acetyl-alpha-D-glucosamine 1-phosphate: step 1/1. The protein operates within bacterial outer membrane biogenesis; LPS lipid A biosynthesis. Catalyzes the last two sequential reactions in the de novo biosynthetic pathway for UDP-N-acetylglucosamine (UDP-GlcNAc). The C-terminal domain catalyzes the transfer of acetyl group from acetyl coenzyme A to glucosamine-1-phosphate (GlcN-1-P) to produce N-acetylglucosamine-1-phosphate (GlcNAc-1-P), which is converted into UDP-GlcNAc by the transfer of uridine 5-monophosphate (from uridine 5-triphosphate), a reaction catalyzed by the N-terminal domain. This chain is Bifunctional protein GlmU, found in Proteus mirabilis (strain HI4320).